The primary structure comprises 152 residues: Small ribosomal subunit protein uS15 (152 aa).

Residues 1-16 are compositionally biased toward basic residues; that stretch reads MARIHARRRGKSGSKR. A disordered region spans residues 1–21; the sequence is MARIHARRRGKSGSKRIYRDS.

It belongs to the universal ribosomal protein uS15 family. In terms of assembly, part of the 30S ribosomal subunit.

In Archaeoglobus fulgidus (strain ATCC 49558 / DSM 4304 / JCM 9628 / NBRC 100126 / VC-16), this protein is Small ribosomal subunit protein uS15.